Consider the following 278-residue polypeptide: Putative pyruvate, phosphate dikinase regulatory protein (278 aa).

Position 156–163 (156–163 (GVSRTSKT)) interacts with ADP.

It belongs to the pyruvate, phosphate/water dikinase regulatory protein family. PDRP subfamily.

It catalyses the reaction N(tele)-phospho-L-histidyl/L-threonyl-[pyruvate, phosphate dikinase] + ADP = N(tele)-phospho-L-histidyl/O-phospho-L-threonyl-[pyruvate, phosphate dikinase] + AMP + H(+). It carries out the reaction N(tele)-phospho-L-histidyl/O-phospho-L-threonyl-[pyruvate, phosphate dikinase] + phosphate + H(+) = N(tele)-phospho-L-histidyl/L-threonyl-[pyruvate, phosphate dikinase] + diphosphate. In terms of biological role, bifunctional serine/threonine kinase and phosphorylase involved in the regulation of the pyruvate, phosphate dikinase (PPDK) by catalyzing its phosphorylation/dephosphorylation. The sequence is that of Putative pyruvate, phosphate dikinase regulatory protein from Lactobacillus acidophilus (strain ATCC 700396 / NCK56 / N2 / NCFM).